An 83-amino-acid chain; its full sequence is Disintegrin bitistatin (83 aa).

Residues 2 to 83 form the Disintegrin domain; sequence PPVCGNKILE…GKSSDCPWNH (82 aa). Disulfide bonds link C5/C24, C5/C34, C16/C29, C16/C34, C18/C24, C18/C29, C28/C51, C42/C48, C47/C72, and C60/C79. A Cell attachment site motif is present at residues 64–66; the sequence is RGD.

This sequence belongs to the venom metalloproteinase (M12B) family. P-II subfamily. P-IIa sub-subfamily. In terms of assembly, monomer. In terms of processing, exists in 3 forms in the venom. The forms A, B, and C are present at 53%, 32% and 15%. The forms A and B differ by their disulfide bond pattern in the N-terminal part. No information is known about form C. As to expression, expressed by the venom gland.

The protein localises to the secreted. Its function is as follows. Inhibits fibrinogen interaction with platelets. Acts by binding to alpha-IIb/beta-3 (ITGA2B/ITGB3) on the platelet surface and inhibits aggregation induced by ADP, thrombin, platelet-activating factor and collagen. The chain is Disintegrin bitistatin from Bitis arietans (African puff adder).